The chain runs to 247 residues: Flavin-dependent thymidylate synthase (247 aa).

The ThyX domain occupies 1–237; the sequence is MDVKLLEATD…PKTFEYYEQE (237 aa). DUMP contacts are provided by residues 85–88, 98–100, and arginine 176; these read QITR and SMR. 88–90 lines the FAD pocket; sequence RHR. A ThyX motif motif is present at residues 88-98; it reads RHRHVSFDVQS. Residues 192–194 and histidine 198 each bind FAD; that span reads NAR. DUMP is bound at residue arginine 203. Arginine 203 serves as the catalytic Involved in ionization of N3 of dUMP, leading to its activation.

It belongs to the thymidylate synthase ThyX family. In terms of assembly, homotetramer. FAD serves as cofactor.

The enzyme catalyses dUMP + (6R)-5,10-methylene-5,6,7,8-tetrahydrofolate + NADPH + H(+) = dTMP + (6S)-5,6,7,8-tetrahydrofolate + NADP(+). The protein operates within pyrimidine metabolism; dTTP biosynthesis. In terms of biological role, catalyzes the reductive methylation of 2'-deoxyuridine-5'-monophosphate (dUMP) to 2'-deoxythymidine-5'-monophosphate (dTMP) while utilizing 5,10-methylenetetrahydrofolate (mTHF) as the methyl donor, and NADPH and FADH(2) as the reductant. The protein is Flavin-dependent thymidylate synthase of Haloarcula marismortui (strain ATCC 43049 / DSM 3752 / JCM 8966 / VKM B-1809) (Halobacterium marismortui).